A 1070-amino-acid polypeptide reads, in one-letter code: DNA-directed RNA polymerase subunit beta (1070 aa).

Belongs to the RNA polymerase beta chain family. In plastids the minimal PEP RNA polymerase catalytic core is composed of four subunits: alpha, beta, beta', and beta''. When a (nuclear-encoded) sigma factor is associated with the core the holoenzyme is formed, which can initiate transcription.

The protein localises to the plastid. It is found in the chloroplast. It carries out the reaction RNA(n) + a ribonucleoside 5'-triphosphate = RNA(n+1) + diphosphate. DNA-dependent RNA polymerase catalyzes the transcription of DNA into RNA using the four ribonucleoside triphosphates as substrates. The polypeptide is DNA-directed RNA polymerase subunit beta (Solanum lycopersicum (Tomato)).